The primary structure comprises 840 residues: Lysine-specific demethylase JMJ27 (840 aa).

A compositionally biased stretch (basic residues) spans 1–10 (MEKMRGKRIR). Residues 1–52 (MEKMRGKRIRPRDSGELVEDGRSESERKTRKKENDVVSKGRIGRGRGRGEVS) are disordered. Over residues 11 to 38 (PRDSGELVEDGRSESERKTRKKENDVVS) the composition is skewed to basic and acidic residues. Positions 80, 83, 95, 98, 104, 107, 124, and 127 each coordinate Zn(2+). The RING-type; degenerate zinc-finger motif lies at 80-127 (CHHCKILTSESDLIFCSKCNKKCYCFDCIKRSYSERTHEEVRAACPFC). The region spanning 502 to 798 (PKSGILNLAT…ECLRLTQEFR (297 aa)) is the JmjC domain. Positions 546 and 548 each coordinate Fe cation. The tract at residues 594 to 678 (KEASELENKS…ETDGNTNERS (85 aa)) is disordered. Positions 595-620 (EASELENKSMKEVDESKKDLKDKAAN) are enriched in basic and acidic residues. The segment covering 621 to 631 (EEQSNNSSRPS) has biased composition (polar residues). Over residues 635–646 (EAEKVIISKEDN) the composition is skewed to basic and acidic residues. Over residues 647–659 (PTQPAVSTSVESI) the composition is skewed to polar residues. Residues 660-678 (QEQKLDAPKETDGNTNERS) show a composition bias toward basic and acidic residues. Fe cation is bound at residue histidine 766.

It belongs to the JARID1 histone demethylase family. Interacts with RPN1A. The cofactor is Fe(2+). As to expression, expressed in seedlings, inflorescences, flowers and siliques, and, at low levels, in roots, leaves (including vascular bundles) and stems. Particularly observed in stomatal guard cells.

The protein localises to the nucleus. It is found in the cytoplasm. The catalysed reaction is N(6),N(6)-dimethyl-L-lysyl(9)-[histone H3] + 2-oxoglutarate + O2 = N(6)-methyl-L-lysyl(9)-[histone H3] + formaldehyde + succinate + CO2. The enzyme catalyses N(6)-methyl-L-lysyl(9)-[histone H3] + 2-oxoglutarate + O2 = L-lysyl(9)-[histone H3] + formaldehyde + succinate + CO2. It carries out the reaction N(6),N(6)-dimethyl-L-lysyl(9)-[histone H3] + 2 2-oxoglutarate + 2 O2 = L-lysyl(9)-[histone H3] + 2 formaldehyde + 2 succinate + 2 CO2. In terms of biological role, histone demethylase that demethylates 'Lys-9' (H3K9me) of histone H3 with a specific activity for H3K9me1 and H3K9me2. No activity on H3K4, H3K27, H3K36, H3R2 and H4R3 methyl marks, but weak activity on H3K9me3. Involved in regulation of gene expression. Regulates flowering time by repressing the major flowering regulator CONSTANS (CO) and promoting FLOWERING LOCUS C (FLC). Exhibits a positive impact on abscisic acid- (ABA), hydrogen peroxide- (H(2)O(2)) and calcium- (Ca(2+)) induced stomatal closure. Promotes stomatal-closure-dependent drought-stress responses through its histone demethylase activity toward at least GOLS2 and RD20 loci, thus protecting them from silencing by removing H3K9me2 marks in drought conditions. Required for plant defenses leading to resistance against the virulent bacterial pathogen Pseudomonas syringae pv. tomato DC3000 (Pst DC3000) via a negative regulation of WRKY25 (a repressor of defense) and by triggering the expression of several pathogenesis-related (PR) proteins (e.g. PR1, PR3, PR4 and PR5). This Arabidopsis thaliana (Mouse-ear cress) protein is Lysine-specific demethylase JMJ27.